The sequence spans 75 residues: MALVKKSLFLVLFLGLVSLSICEEKRENEDEEEQEDDEQSEEKRALWKTLLKKVGKVAGKAVLNAVTNMANQNEQ.

An N-terminal signal peptide occupies residues 1–22 (MALVKKSLFLVLFLGLVSLSIC). Residues 23 to 42 (EEKRENEDEEEQEDDEQSEE) constitute a propeptide that is removed on maturation.

The protein belongs to the frog skin active peptide (FSAP) family. Dermaseptin subfamily. Expressed by the skin glands.

The protein localises to the secreted. Possesses a potent antimicrobial activity against Gram-positive and Gram-negative bacteria. Probably acts by disturbing membrane functions with its amphipathic structure. The sequence is that of Dermaseptin-DA2 from Agalychnis dacnicolor (Giant Mexican leaf frog).